Consider the following 192-residue polypeptide: Orotate phosphoribosyltransferase (192 aa).

116–124 (EDVVTTGKS) is a binding site for 5-phospho-alpha-D-ribose 1-diphosphate. T120 and R148 together coordinate orotate.

It belongs to the purine/pyrimidine phosphoribosyltransferase family. PyrE subfamily. As to quaternary structure, homodimer. It depends on Mg(2+) as a cofactor.

The enzyme catalyses orotidine 5'-phosphate + diphosphate = orotate + 5-phospho-alpha-D-ribose 1-diphosphate. It participates in pyrimidine metabolism; UMP biosynthesis via de novo pathway; UMP from orotate: step 1/2. Its function is as follows. Catalyzes the transfer of a ribosyl phosphate group from 5-phosphoribose 1-diphosphate to orotate, leading to the formation of orotidine monophosphate (OMP). The chain is Orotate phosphoribosyltransferase from Clostridium perfringens (strain ATCC 13124 / DSM 756 / JCM 1290 / NCIMB 6125 / NCTC 8237 / Type A).